Here is a 179-residue protein sequence, read N- to C-terminus: ATP synthase subunit delta (179 aa).

Belongs to the ATPase delta chain family. F-type ATPases have 2 components, F(1) - the catalytic core - and F(0) - the membrane proton channel. F(1) has five subunits: alpha(3), beta(3), gamma(1), delta(1), epsilon(1). F(0) has three main subunits: a(1), b(2) and c(10-14). The alpha and beta chains form an alternating ring which encloses part of the gamma chain. F(1) is attached to F(0) by a central stalk formed by the gamma and epsilon chains, while a peripheral stalk is formed by the delta and b chains.

The protein resides in the cell inner membrane. In terms of biological role, f(1)F(0) ATP synthase produces ATP from ADP in the presence of a proton or sodium gradient. F-type ATPases consist of two structural domains, F(1) containing the extramembraneous catalytic core and F(0) containing the membrane proton channel, linked together by a central stalk and a peripheral stalk. During catalysis, ATP synthesis in the catalytic domain of F(1) is coupled via a rotary mechanism of the central stalk subunits to proton translocation. This protein is part of the stalk that links CF(0) to CF(1). It either transmits conformational changes from CF(0) to CF(1) or is implicated in proton conduction. This chain is ATP synthase subunit delta, found in Paraburkholderia phymatum (strain DSM 17167 / CIP 108236 / LMG 21445 / STM815) (Burkholderia phymatum).